The sequence spans 413 residues: Cardiolipin synthase B (413 aa).

PLD phosphodiesterase domains follow at residues 108 to 135 and 285 to 312; these read IFRRMHRKIVVIDDRIAFVGGINYSAEH and RRRPLHGKVALMDDHWATVGSSNLDPLS. Catalysis depends on residues His113, Lys115, Asp120, His290, Lys292, and Asp297. Positions 388-413 are disordered; it reads AQVPPPAQPEMETQDRVDPENTGVKP.

This sequence belongs to the phospholipase D family. Cardiolipin synthase subfamily. ClsB sub-subfamily.

It localises to the cell membrane. The catalysed reaction is 2 a 1,2-diacyl-sn-glycero-3-phospho-(1'-sn-glycerol) = a cardiolipin + glycerol. Its function is as follows. Catalyzes the phosphatidyl group transfer from one phosphatidylglycerol molecule to another to form cardiolipin (CL) (diphosphatidylglycerol) and glycerol. This is Cardiolipin synthase B from Salmonella typhimurium (strain LT2 / SGSC1412 / ATCC 700720).